The sequence spans 170 residues: Putative pre-16S rRNA nuclease (170 aa).

The tract at residues 1–25 is disordered; that stretch reads MVPAQHRPPDRPGDPAHDPGRGRRL. Residues 7–21 show a composition bias toward basic and acidic residues; the sequence is RPPDRPGDPAHDPGR.

Belongs to the YqgF nuclease family.

Its subcellular location is the cytoplasm. Its function is as follows. Could be a nuclease involved in processing of the 5'-end of pre-16S rRNA. This chain is Putative pre-16S rRNA nuclease, found in Mycobacterium tuberculosis (strain ATCC 25177 / H37Ra).